We begin with the raw amino-acid sequence, 1577 residues long: Dynamin-binding protein (1577 aa).

Met-1 is subject to N-acetylmethionine. SH3 domains are found at residues 2-61 (EPGS…IVTI), 66-126 (EGER…ELCL), and 145-204 (YSMG…LLGP). Positions 209–242 (DESVNAGSGDDSTLNDEVDVSPEEVESEGDEDDQ) are disordered. Over residues 221–242 (TLNDEVDVSPEEVESEGDEDDQ) the composition is skewed to acidic residues. The region spanning 243-302 (QAGTYGIALYRFQALESNELDFEVGDKIRILGTLEDGWLEGRLKGKTGIFPHRFVKLCPS) is the SH3 4 domain. 2 disordered regions span residues 307 to 361 (ETMA…EEPL) and 375 to 437 (GQDE…SRQC). Over residues 400–410 (PDLSQEVNGIS) the composition is skewed to polar residues. Position 494 is a phosphoserine (Ser-494). 2 disordered regions span residues 519–547 (PERP…DNLD) and 590–681 (RGSS…SEYT). Residues 617 to 626 (TPTSTSPHLL) are compositionally biased toward low complexity. The segment covering 632–651 (KPGPPLVVRPSRPAPLPPPT) has biased composition (pro residues). Polar residues predominate over residues 652 to 662 (QQRLNTASPKP). Basic and acidic residues predominate over residues 672–681 (APEKEGSEYT). Ser-684 carries the phosphoserine modification. Residues 705–755 (LDMHTRAQEELNLLLEEKQDESLRAETLETLKSYESTIQSLNLELQQLREM) are a coiled coil. A DH domain is found at 784 to 967 (KRAKVVAELL…KEINANINEY (184 aa)). A BAR domain is found at 1008-1217 (LKHLTGFAPQ…LKASDREGNL (210 aa)). The 64-residue stretch at 1285-1348 (PPEKLFHVQR…YSSFLKPYNP (64 aa)) folds into the SH3 5 domain. The span at 1353-1375 (SDSSVVSHSSTESEHSGSSPSFH) shows a compositional bias: low complexity. 2 disordered regions span residues 1353 to 1381 (SDSS…NSSS) and 1415 to 1510 (ETLG…LGSS). Composition is skewed to polar residues over residues 1418 to 1428 (GVSSNTGNPET) and 1484 to 1497 (DQGS…SRAC). The region spanning 1513-1576 (EGNQVYFAIY…PSNYIRKTEY (64 aa)) is the SH3 6 domain.

In terms of assembly, binds DNM1 via its N-terminal SH3 domains. The C-terminal SH3 domain binds a complex containing actin, tubulin, Hsp70 and actin-regulatory proteins, such as ENAH, EVL, WIRE, CR16, WAVE1 and NAP1L1. Interacts with FASLG. Interacts (via SH3 domain 6) with WASL. Interacts (via SH3 domain 6) interacts with ENAH. Interacts (via C-terminal domain) with TJP1; required for the apical cell-cell junction localization of DNMBP. Widely expressed.

The protein resides in the cytoplasm. Its subcellular location is the golgi apparatus. It localises to the golgi stack. The protein localises to the cytoskeleton. It is found in the synapse. The protein resides in the cell junction. In terms of biological role, plays a critical role as a guanine nucleotide exchange factor (GEF) for CDC42 in several intracellular processes associated with the actin and microtubule cytoskeleton. Regulates the structure of apical junctions in epithelial cells. Participates in the normal lumenogenesis of epithelial cell cysts by regulating spindle orientation. Plays a role in ciliogenesis. May play a role in membrane trafficking between the cell surface and the Golgi. This chain is Dynamin-binding protein, found in Rattus norvegicus (Rat).